We begin with the raw amino-acid sequence, 672 residues long: Acetoacetyl-CoA synthetase (672 aa).

This sequence belongs to the ATP-dependent AMP-binding enzyme family.

It localises to the cytoplasm. The protein resides in the cytosol. The enzyme catalyses acetoacetate + ATP + CoA = acetoacetyl-CoA + AMP + diphosphate. Its function is as follows. Activates acetoacetate to acetoacetyl-CoA. This is Acetoacetyl-CoA synthetase (aacs) from Xenopus tropicalis (Western clawed frog).